The sequence spans 253 residues: 5-oxoprolinase subunit A (253 aa).

Belongs to the LamB/PxpA family. In terms of assembly, forms a complex composed of PxpA, PxpB and PxpC.

It catalyses the reaction 5-oxo-L-proline + ATP + 2 H2O = L-glutamate + ADP + phosphate + H(+). Catalyzes the cleavage of 5-oxoproline to form L-glutamate coupled to the hydrolysis of ATP to ADP and inorganic phosphate. The sequence is that of 5-oxoprolinase subunit A from Shouchella clausii (strain KSM-K16) (Alkalihalobacillus clausii).